The following is a 935-amino-acid chain: Phosphoenolpyruvate carboxylase (935 aa).

Catalysis depends on residues His-161 and Lys-593.

This sequence belongs to the PEPCase type 1 family. Requires Mg(2+) as cofactor.

The catalysed reaction is oxaloacetate + phosphate = phosphoenolpyruvate + hydrogencarbonate. Forms oxaloacetate, a four-carbon dicarboxylic acid source for the tricarboxylic acid cycle. In Mycobacterium avium (strain 104), this protein is Phosphoenolpyruvate carboxylase.